Here is a 200-residue protein sequence, read N- to C-terminus: dITP/XTP pyrophosphatase (200 aa).

Residue 8-13 (TGNQGK) participates in substrate binding. Asp-69 (proton acceptor) is an active-site residue. Mg(2+) is bound at residue Asp-69. Residues Ser-70, 154-157 (FGYD), Lys-177, and 182-183 (HR) contribute to the substrate site.

It belongs to the HAM1 NTPase family. As to quaternary structure, homodimer. Requires Mg(2+) as cofactor.

The catalysed reaction is XTP + H2O = XMP + diphosphate + H(+). It catalyses the reaction dITP + H2O = dIMP + diphosphate + H(+). The enzyme catalyses ITP + H2O = IMP + diphosphate + H(+). Its function is as follows. Pyrophosphatase that catalyzes the hydrolysis of nucleoside triphosphates to their monophosphate derivatives, with a high preference for the non-canonical purine nucleotides XTP (xanthosine triphosphate), dITP (deoxyinosine triphosphate) and ITP. Seems to function as a house-cleaning enzyme that removes non-canonical purine nucleotides from the nucleotide pool, thus preventing their incorporation into DNA/RNA and avoiding chromosomal lesions. The polypeptide is dITP/XTP pyrophosphatase (Vibrio vulnificus (strain CMCP6)).